Reading from the N-terminus, the 152-residue chain is Protein-export protein SecB (152 aa).

This sequence belongs to the SecB family. In terms of assembly, homotetramer, a dimer of dimers. One homotetramer interacts with 1 SecA dimer.

It localises to the cytoplasm. One of the proteins required for the normal export of preproteins out of the cell cytoplasm. It is a molecular chaperone that binds to a subset of precursor proteins, maintaining them in a translocation-competent state. It also specifically binds to its receptor SecA. In Rickettsia peacockii (strain Rustic), this protein is Protein-export protein SecB.